The chain runs to 663 residues: Transketolase 1 (663 aa).

Residue His26 coordinates substrate. Lys46 is modified (N6-acetyllysine). Thiamine diphosphate is bound by residues His66 and 114–116 (GPL). Asp155 is a binding site for Mg(2+). Thiamine diphosphate is bound by residues Gly156 and Asn185. Mg(2+) contacts are provided by Asn185 and Ile187. Residues His261, Arg358, and Ser385 each coordinate substrate. Residue His261 coordinates thiamine diphosphate. Glu411 (proton donor) is an active-site residue. Position 437 (Phe437) interacts with thiamine diphosphate. 4 residues coordinate substrate: His461, Asp469, His473, and Arg520.

Belongs to the transketolase family. As to quaternary structure, homodimer. Mg(2+) is required as a cofactor. It depends on Ca(2+) as a cofactor. Mn(2+) serves as cofactor. Requires Co(2+) as cofactor. The cofactor is thiamine diphosphate.

The enzyme catalyses D-sedoheptulose 7-phosphate + D-glyceraldehyde 3-phosphate = aldehydo-D-ribose 5-phosphate + D-xylulose 5-phosphate. Functionally, catalyzes the transfer of a two-carbon ketol group from a ketose donor to an aldose acceptor, via a covalent intermediate with the cofactor thiamine pyrophosphate. Thus, catalyzes the reversible transfer of a two-carbon ketol group from sedoheptulose-7-phosphate to glyceraldehyde-3-phosphate, producing xylulose-5-phosphate and ribose-5-phosphate. This chain is Transketolase 1 (tktA), found in Escherichia coli (strain K12).